A 72-amino-acid chain; its full sequence is ATP synthase subunit c (72 aa).

Transmembrane regions (helical) follow at residues 1-21 (MSLG…GAGI) and 48-68 (MFIG…FSFI).

This sequence belongs to the ATPase C chain family. As to quaternary structure, F-type ATPases have 2 components, F(1) - the catalytic core - and F(0) - the membrane proton channel. F(1) has five subunits: alpha(3), beta(3), gamma(1), delta(1), epsilon(1). F(0) has three main subunits: a(1), b(2) and c(10-14). The alpha and beta chains form an alternating ring which encloses part of the gamma chain. F(1) is attached to F(0) by a central stalk formed by the gamma and epsilon chains, while a peripheral stalk is formed by the delta and b chains.

The protein resides in the cell membrane. In terms of biological role, f(1)F(0) ATP synthase produces ATP from ADP in the presence of a proton or sodium gradient. F-type ATPases consist of two structural domains, F(1) containing the extramembraneous catalytic core and F(0) containing the membrane proton channel, linked together by a central stalk and a peripheral stalk. During catalysis, ATP synthesis in the catalytic domain of F(1) is coupled via a rotary mechanism of the central stalk subunits to proton translocation. Functionally, key component of the F(0) channel; it plays a direct role in translocation across the membrane. A homomeric c-ring of between 10-14 subunits forms the central stalk rotor element with the F(1) delta and epsilon subunits. This Bacillus caldotenax protein is ATP synthase subunit c.